The chain runs to 453 residues: Cytochrome P450 monooxygenase CYP2 (453 aa).

Residues 13–29 (MVITMLHGSSTYSLLAS) form a helical membrane-spanning segment. A glycan (N-linked (GlcNAc...) asparagine) is linked at Asn-85. Position 397 (Cys-397) interacts with heme.

The protein belongs to the cytochrome P450 family. Heme is required as a cofactor.

Its subcellular location is the membrane. It functions in the pathway secondary metabolite biosynthesis. Cytochrome P450 monooxygenase; part of the gene cluster that mediates the biosynthesis of a tyrosine-derived cytochalasan acting as a fungal signal recognized by resistant rice plants and leads to avirulence in Pi33 resistant rice cultivars. The first step in the pathway is catalyzed by the hybrid PKS-NRPS ACE1, assisted by the enoyl reductase RAP1, that are responsible for fusion of the tyrosine precursor and the polyketide backbone. The polyketide synthase module (PKS) of ACE1 is responsible for the synthesis of the polyketide backbone and the downstream nonribosomal peptide synthetase (NRPS) amidates the carboxyl end of the polyketide with the tyrosine precursor. Because ACE1 lacks a designated enoylreductase (ER) domain, the required activity is provided the enoyl reductase RAP1. Reduction by the hydrolyase ORFZ, followed by dehydration and intra-molecular Diels-Alder cyclization by the Diels-Alderase ORF3 then yield the required isoindolone-fused macrocycle. A number of oxidative steps catalyzed by the tailoring enzymes identified within the cluster, including cytochrome P450 monooxygenases CYP1 to CYP4, the FAD-linked oxidoreductase OXR2 and the short-chain dehydrogenase/reductase OXR1, are further required to afford the final cytochalasans that confer avirulence and which have still to be identified. The monooxygenase CYP1 has been shown to be a site-selective C-18 hydroxylase whereas the function of CYP3 is the site-selective epoxidation of the C-6/C-7 olefin that is present in some intermediate compounds. Finally, SYN2 and RAP2 are not required for avirulence in Pi33 resistant rice cultivars. In Pyricularia oryzae (strain 70-15 / ATCC MYA-4617 / FGSC 8958) (Rice blast fungus), this protein is Cytochrome P450 monooxygenase CYP2.